The chain runs to 446 residues: 3-phosphoshikimate 1-carboxyvinyltransferase (446 aa).

3 residues coordinate 3-phosphoshikimate: Lys21, Ser22, and Arg26. Residue Lys21 participates in phosphoenolpyruvate binding. Phosphoenolpyruvate contacts are provided by Gly94 and Arg122. Residues Ser167, Gln169, Asp315, and Lys342 each contribute to the 3-phosphoshikimate site. A phosphoenolpyruvate-binding site is contributed by Gln169. Catalysis depends on Asp315, which acts as the Proton acceptor. Residues Arg346 and Arg388 each contribute to the phosphoenolpyruvate site.

The protein belongs to the EPSP synthase family. Monomer.

The protein resides in the cytoplasm. The enzyme catalyses 3-phosphoshikimate + phosphoenolpyruvate = 5-O-(1-carboxyvinyl)-3-phosphoshikimate + phosphate. It participates in metabolic intermediate biosynthesis; chorismate biosynthesis; chorismate from D-erythrose 4-phosphate and phosphoenolpyruvate: step 6/7. In terms of biological role, catalyzes the transfer of the enolpyruvyl moiety of phosphoenolpyruvate (PEP) to the 5-hydroxyl of shikimate-3-phosphate (S3P) to produce enolpyruvyl shikimate-3-phosphate and inorganic phosphate. The sequence is that of 3-phosphoshikimate 1-carboxyvinyltransferase from Alkalilimnicola ehrlichii (strain ATCC BAA-1101 / DSM 17681 / MLHE-1).